We begin with the raw amino-acid sequence, 195 residues long: Interferon omega-2 (195 aa).

The N-terminal stretch at 1–23 (MALLPSLLTALVVYELWPCGALG) is a signal peptide. 2 cysteine pairs are disulfide-bonded: Cys-24–Cys-122 and Cys-52–Cys-162. Asn-101 carries an N-linked (GlcNAc...) asparagine glycan.

This sequence belongs to the alpha/beta interferon family.

The protein resides in the secreted. In Equus caballus (Horse), this protein is Interferon omega-2.